The chain runs to 175 residues: ATP synthase subunit b (175 aa).

Residues 18 to 38 (VTSWEPFVANLIAFILMVVIL) form a helical membrane-spanning segment.

It belongs to the ATPase B chain family. F-type ATPases have 2 components, F(1) - the catalytic core - and F(0) - the membrane proton channel. F(1) has five subunits: alpha(3), beta(3), gamma(1), delta(1), epsilon(1). F(0) has three main subunits: a(1), b(2) and c(10-14). The alpha and beta chains form an alternating ring which encloses part of the gamma chain. F(1) is attached to F(0) by a central stalk formed by the gamma and epsilon chains, while a peripheral stalk is formed by the delta and b chains.

It is found in the cell inner membrane. Functionally, f(1)F(0) ATP synthase produces ATP from ADP in the presence of a proton or sodium gradient. F-type ATPases consist of two structural domains, F(1) containing the extramembraneous catalytic core and F(0) containing the membrane proton channel, linked together by a central stalk and a peripheral stalk. During catalysis, ATP synthesis in the catalytic domain of F(1) is coupled via a rotary mechanism of the central stalk subunits to proton translocation. In terms of biological role, component of the F(0) channel, it forms part of the peripheral stalk, linking F(1) to F(0). The chain is ATP synthase subunit b from Akkermansia muciniphila (strain ATCC BAA-835 / DSM 22959 / JCM 33894 / BCRC 81048 / CCUG 64013 / CIP 107961 / Muc).